A 660-amino-acid chain; its full sequence is MEGDGSDLEPPDAGDDSKSENGENAPIYCICRKPDINCFMIGCDNCNEWFHGDCIRITEKMAKAIREWYCRECREKDPKLEIRYRHKKCRERDGSERAGSEPRDEGGGRKRPASDPELQRRAGSGTGVGAMLARGSASPHKSSPQPLVATPSQHHHQQQQQQQQQIKRSARMCGECEACRRTEDCGHCDFCRDMKKFGGPNKIRQKCRLRQCQLRARESYKYFPSSLSPVTPSEALPRPRRPPPTQQQPQQSQKLGRIREDEGTVLSSVVKEPPEATATPEPLSDEDLALDPDLYQDFCAGAFDDHGLPWMSDAEESPFLDPALRKRAVKVKHVKRREKKSEKKKEERYKRHRQKQKHKDKWKHPERADAKDPASLPQCLGPGCVRAAQPGSKYCSDDCGMKLAANRIYEILPQRIQQWQQSPCIAEEHGKKLLERIRREQQSARTRLQEMERRFHELEAIILRAKQQAVREDEENNENDSDDTDLQIFCVSCGHPINPRVALRHMERCYAKYESQTSFGSMYPTRIEGATRLFCDVYNPQSKTYCKRLQVLCPEHSRDPKVPADEVCGCPLVRDVFELTGDFCRLPKRQCNRHYCWEKLRRAEVDLERVRVWYKLDELFEQERNVRTAMTNRAGLLALMLHQTIQHDPLTTDLRSSADR.

An N-acetylmethionine modification is found at methionine 1. Residues 1–14 show a composition bias toward acidic residues; that stretch reads MEGDGSDLEPPDAG. A disordered region spans residues 1 to 20; the sequence is MEGDGSDLEPPDAGDDSKSE. Serine 6 and serine 19 each carry phosphoserine. Residues 28 to 76 form a PHD-type zinc finger; sequence YCICRKPDINCFMIGCDNCNEWFHGDCIRITEKMAKAIREWYCRECREK. Residues 91-120 show a composition bias toward basic and acidic residues; the sequence is ERDGSERAGSEPRDEGGGRKRPASDPELQR. Residues 91–166 form a disordered region; the sequence is ERDGSERAGS…QQQQQQQQQI (76 aa). Serine 124 is subject to Phosphoserine. Residues 164–213 form a CXXC-type zinc finger; sequence QQIKRSARMCGECEACRRTEDCGHCDFCRDMKKFGGPNKIRQKCRLRQCQ. Residues cysteine 173, cysteine 176, cysteine 179, cysteine 185, cysteine 188, cysteine 191, cysteine 207, and cysteine 212 each contribute to the Zn(2+) site. Disordered regions lie at residues 223–287 and 328–375; these read FPSS…SDED and AVKV…DPAS. A Phosphoserine modification is found at serine 228. At threonine 231 the chain carries Phosphothreonine. Residue lysine 254 forms a Glycyl lysine isopeptide (Lys-Gly) (interchain with G-Cter in SUMO2) linkage. Positions 328–338 are enriched in basic residues; the sequence is AVKVKHVKRRE. Over residues 339–349 the composition is skewed to basic and acidic residues; sequence KKSEKKKEERY. Basic residues predominate over residues 350–362; that stretch reads KRHRQKQKHKDKW. Residues 363–372 are compositionally biased toward basic and acidic residues; the sequence is KHPERADAKD. The stretch at 426–479 forms a coiled coil; that stretch reads AEEHGKKLLERIRREQQSARTRLQEMERRFHELEAIILRAKQQAVREDEENNEN.

In terms of assembly, component of the SET1 complex, at least composed of the catalytic subunit (SETD1A or SETD1B), WDR5, WDR82, RBBP5, ASH2L/ASH2, CXXC1/CFP1, HCFC1 and DPY30. Interacts with SETD1A. Interacts with ZNF335. Interacts with PRDM9; this interaction does not link PRDM9-activated recombination hotspot sites with DSB machinery and is not required for the hotspot recognition pathway. Interacts with histone H3K4me3. In terms of tissue distribution, expressed in seminiferous tubules and in both germ cells and Sertoli cells. Highly expressed in spermatogonia, weakly expressed in leptonema and zygonema, and then again high expression in pachynema and diplonema, decreasing to undetectable levels in spermatids.

The protein resides in the nucleus speckle. It localises to the nucleus. Its function is as follows. Transcriptional activator that exhibits a unique DNA binding specificity for CpG unmethylated motifs with a preference for CpGG. The protein is CXXC-type zinc finger protein 1 (Cxxc1) of Mus musculus (Mouse).